A 66-amino-acid chain; its full sequence is uncharacterized protein (66 aa).

This is an uncharacterized protein from Saccharomyces cerevisiae (strain ATCC 204508 / S288c) (Baker's yeast).